Here is a 122-residue protein sequence, read N- to C-terminus: Large ribosomal subunit protein uL14 (122 aa).

Belongs to the universal ribosomal protein uL14 family. Part of the 50S ribosomal subunit. Forms a cluster with proteins L3 and L19. In the 70S ribosome, L14 and L19 interact and together make contacts with the 16S rRNA in bridges B5 and B8.

Binds to 23S rRNA. Forms part of two intersubunit bridges in the 70S ribosome. The protein is Large ribosomal subunit protein uL14 of Cupriavidus metallidurans (strain ATCC 43123 / DSM 2839 / NBRC 102507 / CH34) (Ralstonia metallidurans).